A 179-amino-acid chain; its full sequence is Cell division protein SepF (179 aa).

The disordered stretch occupies residues 18-55 (EDSSLPYEKRDEPVFTPVNSSQEPALPMNQPSQSAGTK). Positions 34 to 55 (PVNSSQEPALPMNQPSQSAGTK) are enriched in polar residues.

This sequence belongs to the SepF family. In terms of assembly, homodimer. Interacts with FtsZ.

It is found in the cytoplasm. In terms of biological role, cell division protein that is part of the divisome complex and is recruited early to the Z-ring. Probably stimulates Z-ring formation, perhaps through the cross-linking of FtsZ protofilaments. Its function overlaps with FtsA. The chain is Cell division protein SepF from Streptococcus pneumoniae (strain ATCC 700669 / Spain 23F-1).